The chain runs to 629 residues: Chaperone protein DnaK (629 aa).

The span at 576–587 shows a compositional bias: low complexity; sequence QAYQQQQDAQAG. A disordered region spans residues 576–629; that stretch reads QAYQQQQDAQAGAAGGAGGMGGMGGMADGPGGAADADGDDEEYVDADFEDVDEE. Residues 588 to 607 are compositionally biased toward gly residues; the sequence is AAGGAGGMGGMGGMADGPGG. Residues 611 to 629 show a composition bias toward acidic residues; it reads ADGDDEEYVDADFEDVDEE.

It belongs to the heat shock protein 70 family.

Its function is as follows. Acts as a chaperone. The protein is Chaperone protein DnaK of Halobacterium salinarum (strain ATCC 29341 / DSM 671 / R1).